The chain runs to 243 residues: BTB/POZ domain-containing protein At4g08455 (243 aa).

The stretch at 19 to 51 forms a coiled coil; sequence KECYVEAGETEEELKREIDDLKAKVAFLRLSSS. The BTB domain occupies 64-136; the sequence is TDVVLIASED…LYTAEACLDE (73 aa).

Interacts with CUL3A and CUL3B.

Its pathway is protein modification; protein ubiquitination. Functionally, may act as a substrate-specific adapter of an E3 ubiquitin-protein ligase complex (CUL3-RBX1-BTB) which mediates the ubiquitination and subsequent proteasomal degradation of target proteins. The polypeptide is BTB/POZ domain-containing protein At4g08455 (Arabidopsis thaliana (Mouse-ear cress)).